Here is a 526-residue protein sequence, read N- to C-terminus: Bifunctional purine biosynthesis protein PurH (526 aa).

The region spanning methionine 1 to valine 149 is the MGS-like domain.

It belongs to the PurH family.

The enzyme catalyses (6R)-10-formyltetrahydrofolate + 5-amino-1-(5-phospho-beta-D-ribosyl)imidazole-4-carboxamide = 5-formamido-1-(5-phospho-D-ribosyl)imidazole-4-carboxamide + (6S)-5,6,7,8-tetrahydrofolate. It catalyses the reaction IMP + H2O = 5-formamido-1-(5-phospho-D-ribosyl)imidazole-4-carboxamide. It participates in purine metabolism; IMP biosynthesis via de novo pathway; 5-formamido-1-(5-phospho-D-ribosyl)imidazole-4-carboxamide from 5-amino-1-(5-phospho-D-ribosyl)imidazole-4-carboxamide (10-formyl THF route): step 1/1. Its pathway is purine metabolism; IMP biosynthesis via de novo pathway; IMP from 5-formamido-1-(5-phospho-D-ribosyl)imidazole-4-carboxamide: step 1/1. The sequence is that of Bifunctional purine biosynthesis protein PurH from Rhodospirillum rubrum (strain ATCC 11170 / ATH 1.1.1 / DSM 467 / LMG 4362 / NCIMB 8255 / S1).